The primary structure comprises 585 residues: NADP-reducing hydrogenase subunit HndD (585 aa).

Residues 2 to 85 (SMLTITIDGK…NMVVKTNSLR (84 aa)) enclose the 2Fe-2S ferredoxin-type domain. [2Fe-2S] cluster-binding residues include C36, C52, C55, and C69. The 4Fe-4S His(Cys)3-ligated-type domain occupies 85–124 (RVLNARRTVLELLLSDHPKDCLVCAKSGECELQTLAERFG). Positions 101, 105, 108, and 114 each coordinate [4Fe-4S] cluster. 4Fe-4S ferredoxin-type domains follow at residues 144–174 (ASII…VLSG) and 185–216 (PAFE…EHEY).

In terms of assembly, heterotetramer composed of HndA, HndB, HndC and HndD subunits. HndD is probably the hydrogenase subunit. [4Fe-4S] cluster serves as cofactor.

It catalyses the reaction H2 + NADP(+) = NADPH + H(+). Inhibited by oxygen. Its function is as follows. Catalyzes the reduction of NADP in the presence of molecular H(2) to yield NADPH. This is NADP-reducing hydrogenase subunit HndD (hndD) from Solidesulfovibrio fructosivorans (Desulfovibrio fructosivorans).